The sequence spans 1462 residues: Gag-Pro-Pol polyprotein (1462 aa).

Gly2 is lipidated: N-myristoyl glycine; by host. Residues 93-143 (QIPSHPAPPPPSSPTHDPPDSDPQIPPPYVEPTAPQVLPVMHPHGVPPTHR) form a disordered region. Ser105 carries the post-translational modification Phosphoserine; by host MAPK1. Residues 118-121 (PPPY) carry the PPXY motif motif. The short motif at 124 to 127 (PTAP) is the PTAP/PSAP motif element. 2 consecutive CCHC-type zinc fingers follow at residues 355-372 (QPCF…DCAQ) and 378-395 (GPCP…DCPR). In terms of domain architecture, Peptidase A2 spans 476-554 (IEALLDTGAD…NNWAIIGRDA (79 aa)). Catalysis depends on Asp481, which acts as the For protease activity; shared with dimeric partner. One can recognise a Reverse transcriptase domain in the interval 614–804 (LEAGHIEPYT…GTIKFLGQII (191 aa)). Residues Asp680, Asp755, Asp756, Asp1040, Glu1074, Asp1096, Asp1157, Asp1230, and Asp1287 each contribute to the Mg(2+) site. Residues 1031–1165 (INTAPCLFSD…TDALLITPIL (135 aa)) enclose the RNase H type-1 domain. The region spanning 1219 to 1388 (RGLLPNHIWQ…QPIPETHSLI (170 aa)) is the Integrase catalytic domain. The integrase-type DNA-binding region spans 1393-1443 (HWYYFKLPGLNSRQWKGPQEALQEAAGAALIPVSANSAQWIPWRLLKQAAC).

Homodimer; the homodimers are part of the immature particles. Interacts with human TSG101 and NEDD4; these interactions are essential for budding and release of viral particles. As to quaternary structure, homodimer; further assembles as homohexamers. The cofactor is Mg(2+). In terms of processing, phosphorylation of the matrix protein p19 by MAPK1 seems to play a role in budding. Post-translationally, myristoylated. Myristoylation of the matrix (MA) domain mediates the transport and binding of Gag polyproteins to the host plasma membrane and is required for the assembly of viral particles. Specific enzymatic cleavages by the viral protease yield mature proteins. The polyprotein is cleaved during and after budding, this process is termed maturation. The protease is autoproteolytically processed at its N- and C-termini.

It localises to the virion. It carries out the reaction Endonucleolytic cleavage to 5'-phosphomonoester.. The enzyme catalyses DNA(n) + a 2'-deoxyribonucleoside 5'-triphosphate = DNA(n+1) + diphosphate. In terms of biological role, the matrix domain targets Gag, Gag-Pro and Gag-Pro-Pol polyproteins to the plasma membrane via a multipartite membrane binding signal, that includes its myristoylated N-terminus. Its function is as follows. Matrix protein. Forms the spherical core of the virus that encapsulates the genomic RNA-nucleocapsid complex. Functionally, binds strongly to viral nucleic acids and promote their aggregation. Also destabilizes the nucleic acids duplexes via highly structured zinc-binding motifs. In terms of biological role, the aspartyl protease mediates proteolytic cleavages of Gag and Gag-Pol polyproteins during or shortly after the release of the virion from the plasma membrane. Cleavages take place as an ordered, step-wise cascade to yield mature proteins. This process is called maturation. Displays maximal activity during the budding process just prior to particle release from the cell (Potential). Cleaves the translation initiation factor eIF4G leading to the inhibition of host cap-dependent translation. Its function is as follows. RT is a multifunctional enzyme that converts the viral RNA genome into dsDNA in the cytoplasm, shortly after virus entry into the cell. This enzyme displays a DNA polymerase activity that can copy either DNA or RNA templates, and a ribonuclease H (RNase H) activity that cleaves the RNA strand of RNA-DNA heteroduplexes in a partially processive 3' to 5'-endonucleasic mode. Conversion of viral genomic RNA into dsDNA requires many steps. A tRNA-Pro binds to the primer-binding site (PBS) situated at the 5'-end of the viral RNA. RT uses the 3' end of the tRNA primer to perform a short round of RNA-dependent minus-strand DNA synthesis. The reading proceeds through the U5 region and ends after the repeated (R) region which is present at both ends of viral RNA. The portion of the RNA-DNA heteroduplex is digested by the RNase H, resulting in a ssDNA product attached to the tRNA primer. This ssDNA/tRNA hybridizes with the identical R region situated at the 3' end of viral RNA. This template exchange, known as minus-strand DNA strong stop transfer, can be either intra- or intermolecular. RT uses the 3' end of this newly synthesized short ssDNA to perform the RNA-dependent minus-strand DNA synthesis of the whole template. RNase H digests the RNA template except for a polypurine tract (PPT) situated at the 5' end of the genome. It is not clear if both polymerase and RNase H activities are simultaneous. RNase H probably can proceed both in a polymerase-dependent (RNA cut into small fragments by the same RT performing DNA synthesis) and a polymerase-independent mode (cleavage of remaining RNA fragments by free RTs). Secondly, RT performs DNA-directed plus-strand DNA synthesis using the PPT that has not been removed by RNase H as primer. PPT and tRNA primers are then removed by RNase H. The 3' and 5' ssDNA PBS regions hybridize to form a circular dsDNA intermediate. Strand displacement synthesis by RT to the PBS and PPT ends produces a blunt ended, linear dsDNA copy of the viral genome that includes long terminal repeats (LTRs) at both ends. Catalyzes viral DNA integration into the host chromosome, by performing a series of DNA cutting and joining reactions. In Homo sapiens (Human), this protein is Gag-Pro-Pol polyprotein (gag-pro-pol).